Consider the following 308-residue polypeptide: Eukaryotic translation initiation factor 3 subunit G-A (308 aa).

2 disordered regions span residues 1 to 35 (MPTGDYDSKPSWADQVEEEGIDAEPLSPQIRKPDP) and 177 to 226 (TGDK…ADDN). Low complexity predominate over residues 185–194 (GAEPEPAQAP). Residues 209–226 (GGSRRGESMQPNRRADDN) show a composition bias toward basic and acidic residues. The 79-residue stretch at 227-305 (ATIRVTNLSE…LILNVEWAKP (79 aa)) folds into the RRM domain.

The protein belongs to the eIF-3 subunit G family. Component of the eukaryotic translation initiation factor 3 (eIF-3) complex, which is composed of 13 subunits: eif3a, eif3b, eif3c, eif3d, eif3e, eif3f, eif3g, eif3h, eif3i, eif3j, eif3k, eif3l and eif3m.

The protein localises to the cytoplasm. Its function is as follows. RNA-binding component of the eukaryotic translation initiation factor 3 (eIF-3) complex, which is involved in protein synthesis of a specialized repertoire of mRNAs and, together with other initiation factors, stimulates binding of mRNA and methionyl-tRNAi to the 40S ribosome. The eIF-3 complex specifically targets and initiates translation of a subset of mRNAs involved in cell proliferation. This subunit can bind 18S rRNA. The polypeptide is Eukaryotic translation initiation factor 3 subunit G-A (eif3g-a) (Xenopus laevis (African clawed frog)).